A 107-amino-acid chain; its full sequence is N(4)-acetylcytidine amidohydrolase (107 aa).

Residues 9–105 enclose the ASCH domain; the sequence is TFFEFLTPLI…KLFVIEYELI (97 aa). Lys-23 acts as the Proton acceptor in catalysis. The Nucleophile role is filled by Thr-26. Glu-76 acts as the Proton donor in catalysis.

This sequence belongs to the N(4)-acetylcytidine amidohydrolase family.

It catalyses the reaction N(4)-acetylcytidine + H2O = cytidine + acetate + H(+). The catalysed reaction is N(4)-acetyl-2'-deoxycytidine + H2O = 2'-deoxycytidine + acetate + H(+). It carries out the reaction N(4)-acetylcytosine + H2O = cytosine + acetate + H(+). In terms of biological role, catalyzes the hydrolysis of N(4)-acetylcytidine (ac4C). In Vibrio parahaemolyticus serotype O3:K6 (strain RIMD 2210633), this protein is N(4)-acetylcytidine amidohydrolase.